The following is a 321-amino-acid chain: uncharacterized protein (321 aa).

The HTH lacI-type domain maps to 1–56 (MANIKDIAEKAGVSVTTVSRVINNHPYVSEDKRKRVFEAMESLEYTRNIHAVHLSK). Residues 4 to 23 (IKDIAEKAGVSVTTVSRVIN) constitute a DNA-binding region (H-T-H motif).

This is an uncharacterized protein from Bacillus subtilis (strain 168).